The primary structure comprises 401 residues: Heat stress transcription factor A-4a (401 aa).

Residues 13-107 (LPPFLTKTYE…LMKNIHRRKP (95 aa)) mediate DNA binding. The tract at residues 122–188 (PLTDSERVRM…TMVSFVSQVL (67 aa)) is hydrophobic repeat HR-A/B. A Nuclear localization signal motif is present at residues 207–213 (RKRRFPR). The AHA1 motif lies at 256–265 (IAIWENLVSD). The AHA2 signature appears at 341–350 (DGFWQQFFSE). The tract at residues 351 to 373 (NPGSTEQREVQLERKDDKDKAGV) is disordered. Residues 356–373 (EQREVQLERKDDKDKAGV) are compositionally biased toward basic and acidic residues. A Nuclear export signal motif is present at residues 388 to 395 (ITEQLGHL).

Belongs to the HSF family. Class A subfamily. In terms of assembly, homotrimer. Exhibits temperature-dependent phosphorylation.

Its subcellular location is the cytoplasm. The protein resides in the nucleus. In terms of biological role, transcriptional activator that specifically binds DNA sequence 5'-AGAAnnTTCT-3' known as heat shock promoter elements (HSE). This is Heat stress transcription factor A-4a (HSFA4A) from Arabidopsis thaliana (Mouse-ear cress).